The chain runs to 456 residues: F-box/FBD/LRR-repeat protein At3g52680 (456 aa).

Positions lysine 20 to glutamate 73 constitute an F-box domain. 7 LRR repeats span residues histidine 74–phenylalanine 100, asparagine 102–phenylalanine 127, threonine 152–phenylalanine 179, valine 180–arginine 205, threonine 225–glutamate 252, isoleucine 270–leucine 295, and threonine 318–aspartate 344. The FBD domain maps to lysine 358–threonine 409.

This is F-box/FBD/LRR-repeat protein At3g52680 from Arabidopsis thaliana (Mouse-ear cress).